Reading from the N-terminus, the 302-residue chain is GTPase Era (302 aa).

The Era-type G domain occupies 9-177; the sequence is YCGFIAIVGR…EKIVRQSLRE (169 aa). Positions 17–24 are G1; the sequence is GRPNVGKS. Residue 17-24 coordinates GTP; the sequence is GRPNVGKS. Positions 43–47 are G2; sequence QTTRH. A G3 region spans residues 64-67; the sequence is DTPG. Residues 64–68 and 126–129 contribute to the GTP site; these read DTPGL and NKVD. Residues 126–129 are G4; it reads NKVD. The tract at residues 156–158 is G5; sequence ISA. The region spanning 208–285 is the KH type-2 domain; that stretch reads TGEELPYSVT…HLELWVKVKS (78 aa).

This sequence belongs to the TRAFAC class TrmE-Era-EngA-EngB-Septin-like GTPase superfamily. Era GTPase family. In terms of assembly, monomer.

The protein resides in the cytoplasm. It is found in the cell inner membrane. In terms of biological role, an essential GTPase that binds both GDP and GTP, with rapid nucleotide exchange. Plays a role in 16S rRNA processing and 30S ribosomal subunit biogenesis and possibly also in cell cycle regulation and energy metabolism. The sequence is that of GTPase Era from Haemophilus influenzae (strain PittGG).